We begin with the raw amino-acid sequence, 252 residues long: Adenosylcobinamide-GDP ribazoletransferase (252 aa).

Helical transmembrane passes span 34–54 (GASFMPLVGVIVGGIQWIIYK), 55–75 (LCIIIFSLNVSIVIVILAGIV), 113–133 (YACLAIIIDILLKYSFFCSIV), 138–158 (LIIIIAPVMSRFSIVFIAFIG), 174–194 (IGKWQLFWAAFITVITLFFLM), 198–218 (FIYVIILIFAGLFMSFLFNVF), and 230–250 (LLGANNEIVEILTMVMLCVII).

The protein belongs to the CobS family. Requires Mg(2+) as cofactor.

It is found in the cell membrane. The catalysed reaction is alpha-ribazole + adenosylcob(III)inamide-GDP = adenosylcob(III)alamin + GMP + H(+). The enzyme catalyses alpha-ribazole 5'-phosphate + adenosylcob(III)inamide-GDP = adenosylcob(III)alamin 5'-phosphate + GMP + H(+). It participates in cofactor biosynthesis; adenosylcobalamin biosynthesis; adenosylcobalamin from cob(II)yrinate a,c-diamide: step 7/7. Joins adenosylcobinamide-GDP and alpha-ribazole to generate adenosylcobalamin (Ado-cobalamin). Also synthesizes adenosylcobalamin 5'-phosphate from adenosylcobinamide-GDP and alpha-ribazole 5'-phosphate. The sequence is that of Adenosylcobinamide-GDP ribazoletransferase from Clostridium kluyveri (strain NBRC 12016).